A 119-amino-acid chain; its full sequence is Large ribosomal subunit protein bL20 (119 aa).

Belongs to the bacterial ribosomal protein bL20 family.

Binds directly to 23S ribosomal RNA and is necessary for the in vitro assembly process of the 50S ribosomal subunit. It is not involved in the protein synthesizing functions of that subunit. The protein is Large ribosomal subunit protein bL20 of Buchnera aphidicola subsp. Cinara cedri (strain Cc).